A 260-amino-acid polypeptide reads, in one-letter code: Hydroxyethylthiazole kinase 1 (260 aa).

M39 serves as a coordination point for substrate. Residues R115 and T160 each coordinate ATP. G187 is a substrate binding site.

It belongs to the Thz kinase family. The cofactor is Mg(2+).

The catalysed reaction is 5-(2-hydroxyethyl)-4-methylthiazole + ATP = 4-methyl-5-(2-phosphooxyethyl)-thiazole + ADP + H(+). Its pathway is cofactor biosynthesis; thiamine diphosphate biosynthesis; 4-methyl-5-(2-phosphoethyl)-thiazole from 5-(2-hydroxyethyl)-4-methylthiazole: step 1/1. Its function is as follows. Catalyzes the phosphorylation of the hydroxyl group of 4-methyl-5-beta-hydroxyethylthiazole (THZ). The chain is Hydroxyethylthiazole kinase 1 from Streptococcus pneumoniae (strain Hungary19A-6).